Here is a 199-residue protein sequence, read N- to C-terminus: Oleosin 21.2 kDa (199 aa).

Over residues 1-14 (MADTHRVDRTDRHF) the composition is skewed to basic and acidic residues. A disordered region spans residues 1–31 (MADTHRVDRTDRHFQFQSPYEGGRGQGQYEG). At A2 the chain carries N-acetylalanine. A polar region spans residues 2 to 56 (ADTHRVDRTDRHFQFQSPYEGGRGQGQYEGDRGYGGGGYKSMMPESGPSSTQVLS). The segment covering 22–31 (GGRGQGQYEG) has biased composition (gly residues). 3 helical membrane passes run 51-71 (STQV…LALA), 72-92 (GLLL…FLLF), and 96-116 (IVPA…SGMF). Residues 57–128 (LLIGVPVVGS…TGLSSISWVM (72 aa)) form a hydrophobic region. The tract at residues 159–199 (KGKEMGQHVQNKAQDVKQYDISKPHDTTTKGHETQGRTTAA) is disordered. A compositionally biased stretch (basic and acidic residues) spans 172-193 (QDVKQYDISKPHDTTTKGHETQ).

This sequence belongs to the oleosin family.

It is found in the lipid droplet. Its subcellular location is the membrane. Its function is as follows. May have a structural role to stabilize the lipid body during desiccation of the seed by preventing coalescence of the oil. Probably interacts with both lipid and phospholipid moieties of lipid bodies. May also provide recognition signals for specific lipase anchorage in lipolysis during seedling growth. The polypeptide is Oleosin 21.2 kDa (Arabidopsis thaliana (Mouse-ear cress)).